A 246-amino-acid polypeptide reads, in one-letter code: Isoamyl acetate-hydrolyzing esterase (246 aa).

Ser46 (nucleophile) is an active-site residue. Asp201 acts as the Proton donor in catalysis. His204 acts as the Proton acceptor in catalysis.

It belongs to the 'GDSL' lipolytic enzyme family. IAH1 subfamily.

It localises to the cytoplasm. The catalysed reaction is 3-methylbutyl acetate + H2O = 3-methylbutanol + acetate + H(+). The chain is Isoamyl acetate-hydrolyzing esterase (iah1) from Schizosaccharomyces pombe (strain 972 / ATCC 24843) (Fission yeast).